The sequence spans 103 residues: Large ribosomal subunit protein uL24 (103 aa).

Belongs to the universal ribosomal protein uL24 family. In terms of assembly, part of the 50S ribosomal subunit.

Functionally, one of two assembly initiator proteins, it binds directly to the 5'-end of the 23S rRNA, where it nucleates assembly of the 50S subunit. Its function is as follows. One of the proteins that surrounds the polypeptide exit tunnel on the outside of the subunit. The polypeptide is Large ribosomal subunit protein uL24 (Pasteurella multocida (strain Pm70)).